The primary structure comprises 292 residues: Peroxisomal 2,4-dienoyl-CoA reductase [(3E)-enoyl-CoA-producing] (292 aa).

Residues 35 to 40 (GGGSGI), 60 to 64 (RSLPR), and Asp86 contribute to the NADP(+) site. Arg60 is a substrate binding site. Substrate-binding positions include Arg88, Phe118, and 126–128 (SFN). Lys151 is subject to N6-acetyllysine. NADP(+) is bound by residues Lys182 and 208–214 (PGAISGT). Arg219 is a binding site for substrate. The residue at position 287 (Ser287) is a Phosphoserine. The Microbody targeting signal signature appears at 290–292 (AKL). Lys291 carries the N6-acetyllysine modification.

This sequence belongs to the short-chain dehydrogenases/reductases (SDR) family. 2,4-dienoyl-CoA reductase subfamily. In terms of assembly, monomer, dimer and oligomer.

The protein localises to the peroxisome. It carries out the reaction a (2E,4Z)-dienoyl-CoA + NADPH + H(+) = a 4,5-saturated-(3E)-enoyl-CoA + NADP(+). The catalysed reaction is a (2E,4E)-dienoyl-CoA + NADPH + H(+) = a 4,5-saturated-(3E)-enoyl-CoA + NADP(+). The enzyme catalyses (2E,4E)-hexadienoyl-CoA + NADPH + H(+) = (3E)-hexenoyl-CoA + NADP(+). It catalyses the reaction (2E,4E)-decadienoyl-CoA + NADPH + H(+) = (3E)-decenoyl-CoA + NADP(+). It carries out the reaction (2E,4Z,7Z,10Z,13Z,16Z,19Z)-docosaheptaenoyl-CoA + NADPH + H(+) = (3E,7Z,10Z,13Z,16Z,19Z)-docosahexaenoyl-CoA + NADP(+). Auxiliary enzyme of beta-oxidation. Participates in the degradation of unsaturated fatty enoyl-CoA esters having double bonds in both even- and odd-numbered positions in peroxisome. Catalyzes the NADP-dependent reduction of 2,4-dienoyl-CoA to yield trans-3-enoyl-CoA. Has activity towards short and medium chain 2,4-dienoyl-CoAs, but also towards 2,4,7,10,13,16,19-docosaheptaenoyl-CoA, suggesting that it does not constitute a rate limiting step in the peroxisomal degradation of docosahexaenoic acid. The protein is Peroxisomal 2,4-dienoyl-CoA reductase [(3E)-enoyl-CoA-producing] (Decr2) of Rattus norvegicus (Rat).